Consider the following 158-residue polypeptide: SsrA-binding protein (158 aa).

The protein belongs to the SmpB family.

It is found in the cytoplasm. Its function is as follows. Required for rescue of stalled ribosomes mediated by trans-translation. Binds to transfer-messenger RNA (tmRNA), required for stable association of tmRNA with ribosomes. tmRNA and SmpB together mimic tRNA shape, replacing the anticodon stem-loop with SmpB. tmRNA is encoded by the ssrA gene; the 2 termini fold to resemble tRNA(Ala) and it encodes a 'tag peptide', a short internal open reading frame. During trans-translation Ala-aminoacylated tmRNA acts like a tRNA, entering the A-site of stalled ribosomes, displacing the stalled mRNA. The ribosome then switches to translate the ORF on the tmRNA; the nascent peptide is terminated with the 'tag peptide' encoded by the tmRNA and targeted for degradation. The ribosome is freed to recommence translation, which seems to be the essential function of trans-translation. This is SsrA-binding protein from Hydrogenovibrio crunogenus (strain DSM 25203 / XCL-2) (Thiomicrospira crunogena).